The following is a 518-amino-acid chain: Vesicular inhibitory amino acid transporter (518 aa).

Over Met1 to Met125 the chain is Cytoplasmic. The helical transmembrane segment at Phe126–Ile146 threads the bilayer. Over Phe147 to Arg197 the chain is Lumenal, vesicle. A helical membrane pass occupies residues Val198–Ser218. Residues Gly219–Lys258 are Cytoplasmic-facing. Residues Phe259–Leu279 traverse the membrane as a helical segment. The Lumenal, vesicle segment spans residues Ser280–Lys298. Residues Phe299 to Leu319 form a helical membrane-spanning segment. The Cytoplasmic segment spans residues Glu320 to Asn334. The chain crosses the membrane as a helical span at residues Trp335–Trp355. At Ala356–Asn376 the chain is on the lumenal, vesicle side. The helical transmembrane segment at Leu377–Val397 threads the bilayer. Over Leu398–Ala431 the chain is Cytoplasmic. A helical membrane pass occupies residues Leu432 to Leu452. The Lumenal, vesicle segment spans residues Thr453–Gly454. The helical transmembrane segment at Ser455–Trp475 threads the bilayer. Topologically, residues Arg476–Gln482 are cytoplasmic. The chain crosses the membrane as a helical span at residues Val483–His503. Topologically, residues Ser504–Asp518 are lumenal, vesicle.

It belongs to the amino acid/polyamine transporter 2 family. In terms of tissue distribution, initially expressed in late neurula stages in the anterior spinal cord. By early tailbud stages, expression extends posteriorly along the entire developing spinal cord and appears in the hindbrain. In late tailbud embryos, expressed in the forebrain, midbrain, hindbrain, spinal cord and retina. In swimming tadpoles, expressed in an extended and more intense pattern including interneurons.

The protein localises to the cytoplasmic vesicle membrane. Its subcellular location is the presynapse. It catalyses the reaction 4-aminobutanoate(out) + n H(+)(in) = 4-aminobutanoate(in) + n H(+)(out). It carries out the reaction glycine(out) + n H(+)(in) = glycine(in) + n H(+)(out). The catalysed reaction is beta-alanine(out) + n H(+)(in) = beta-alanine(in) + n H(+)(out). In terms of biological role, antiporter that exchanges vesicular protons for cytosolic 4-aminobutanoate or to a lesser extend glycine, thus allowing their secretion from nerve terminals. The transport is equally dependent on the chemical and electrical components of the proton gradient. May also transport beta-alanine. Acidification of GABAergic synaptic vesicles is a prerequisite for 4-aminobutanoate uptake. This chain is Vesicular inhibitory amino acid transporter, found in Xenopus laevis (African clawed frog).